Consider the following 273-residue polypeptide: 2,3,4,5-tetrahydropyridine-2,6-dicarboxylate N-succinyltransferase (273 aa).

Positions 104 and 141 each coordinate substrate.

This sequence belongs to the transferase hexapeptide repeat family. Homotrimer.

It is found in the cytoplasm. The catalysed reaction is (S)-2,3,4,5-tetrahydrodipicolinate + succinyl-CoA + H2O = (S)-2-succinylamino-6-oxoheptanedioate + CoA. The protein operates within amino-acid biosynthesis; L-lysine biosynthesis via DAP pathway; LL-2,6-diaminopimelate from (S)-tetrahydrodipicolinate (succinylase route): step 1/3. The chain is 2,3,4,5-tetrahydropyridine-2,6-dicarboxylate N-succinyltransferase from Nitrosomonas eutropha (strain DSM 101675 / C91 / Nm57).